Consider the following 369-residue polypeptide: MTVFTPLVLVCAGGTGGHLFPAQSLAYALKDRGIRVALATDARVDSIAGDFPAEEIVTIASATPSGRSVLRRAGAVVTLGRGFGQAARAVRRLNPAAVVGFGGYPTVPPMLAAQLLRVPTILHEQNAVMGRANGFLAKGARVIATGFKEVRGVPEKATARRVHTGNPIRPAVLAVAETPYPSLDAEAPLRLLVFGGSQGARVMSEVVPAAIEKLPQDLRARLHLVQQARPEDLTATQNRYLAMGLGGIEAAPFFKDLPGRMASAHLVVARSGASTVSELAAIGRPAILVPLPGALDQDQAANAATLAQIGAALSIPQSAFTPDRLAAELVDLFEAPRKLTQAAAAAKTACILDAADRLAALVAETAAAT.

Residues 15-17, asparagine 126, arginine 169, serine 197, and glutamine 299 contribute to the UDP-N-acetyl-alpha-D-glucosamine site; that span reads TGG.

This sequence belongs to the glycosyltransferase 28 family. MurG subfamily.

It localises to the cell inner membrane. It carries out the reaction di-trans,octa-cis-undecaprenyl diphospho-N-acetyl-alpha-D-muramoyl-L-alanyl-D-glutamyl-meso-2,6-diaminopimeloyl-D-alanyl-D-alanine + UDP-N-acetyl-alpha-D-glucosamine = di-trans,octa-cis-undecaprenyl diphospho-[N-acetyl-alpha-D-glucosaminyl-(1-&gt;4)]-N-acetyl-alpha-D-muramoyl-L-alanyl-D-glutamyl-meso-2,6-diaminopimeloyl-D-alanyl-D-alanine + UDP + H(+). It participates in cell wall biogenesis; peptidoglycan biosynthesis. In terms of biological role, cell wall formation. Catalyzes the transfer of a GlcNAc subunit on undecaprenyl-pyrophosphoryl-MurNAc-pentapeptide (lipid intermediate I) to form undecaprenyl-pyrophosphoryl-MurNAc-(pentapeptide)GlcNAc (lipid intermediate II). This is UDP-N-acetylglucosamine--N-acetylmuramyl-(pentapeptide) pyrophosphoryl-undecaprenol N-acetylglucosamine transferase from Methylorubrum extorquens (strain PA1) (Methylobacterium extorquens).